The sequence spans 490 residues: Protein nucleotidyltransferase YdiU (490 aa).

8 residues coordinate ATP: Gly89, Gly91, Arg92, Lys112, Asp124, Gly125, Arg175, and Arg182. Asp251 acts as the Proton acceptor in catalysis. 2 residues coordinate Mg(2+): Asn252 and Asp261. Asp261 contacts ATP.

The protein belongs to the SELO family. Mg(2+) is required as a cofactor. Mn(2+) serves as cofactor.

The catalysed reaction is L-seryl-[protein] + ATP = 3-O-(5'-adenylyl)-L-seryl-[protein] + diphosphate. It carries out the reaction L-threonyl-[protein] + ATP = 3-O-(5'-adenylyl)-L-threonyl-[protein] + diphosphate. The enzyme catalyses L-tyrosyl-[protein] + ATP = O-(5'-adenylyl)-L-tyrosyl-[protein] + diphosphate. It catalyses the reaction L-histidyl-[protein] + UTP = N(tele)-(5'-uridylyl)-L-histidyl-[protein] + diphosphate. The catalysed reaction is L-seryl-[protein] + UTP = O-(5'-uridylyl)-L-seryl-[protein] + diphosphate. It carries out the reaction L-tyrosyl-[protein] + UTP = O-(5'-uridylyl)-L-tyrosyl-[protein] + diphosphate. Nucleotidyltransferase involved in the post-translational modification of proteins. It can catalyze the addition of adenosine monophosphate (AMP) or uridine monophosphate (UMP) to a protein, resulting in modifications known as AMPylation and UMPylation. The protein is Protein nucleotidyltransferase YdiU of Vibrio vulnificus (strain YJ016).